A 917-amino-acid chain; its full sequence is Translation initiation factor IF-2 (917 aa).

Disordered stretches follow at residues 1-84 and 150-318; these read MSDG…GRAG and KESE…DRER. The segment covering 10–27 has biased composition (polar residues); it reads DGNNTPSQGGEQTRSSRL. Composition is skewed to low complexity over residues 69–84, 154–177, and 227–236; these read AAGPGAGAAARGGRAG, QQAAREQAAAEAAARAAEQAAAEA, and SRPAAAAPAR. Residues 265-274 show a composition bias toward pro residues; the sequence is GAPPAPPRRP. Residues 282-305 show a composition bias toward basic and acidic residues; it reads GGSDRRSGRIDVRAAIEGDDDKTR. In terms of domain architecture, tr-type G spans 416–586; it reads PRAPVVTVMG…LLQSEMLDLK (171 aa). The tract at residues 425–432 is G1; sequence GHVDHGKT. 425 to 432 contacts GTP; that stretch reads GHVDHGKT. Positions 450-454 are G2; it reads GITQH. Residues 472–475 are G3; that stretch reads DTPG. Residues 472–476 and 526–529 contribute to the GTP site; these read DTPGH and NKID. The G4 stretch occupies residues 526–529; it reads NKID. Residues 562–564 are G5; that stretch reads SAL.

The protein belongs to the TRAFAC class translation factor GTPase superfamily. Classic translation factor GTPase family. IF-2 subfamily.

The protein localises to the cytoplasm. In terms of biological role, one of the essential components for the initiation of protein synthesis. Protects formylmethionyl-tRNA from spontaneous hydrolysis and promotes its binding to the 30S ribosomal subunits. Also involved in the hydrolysis of GTP during the formation of the 70S ribosomal complex. The sequence is that of Translation initiation factor IF-2 from Gluconobacter oxydans (strain 621H) (Gluconobacter suboxydans).